The primary structure comprises 78 residues: Large ribosomal subunit protein bL28 (78 aa).

The tract at residues 1–21 (MSRVCQVTGKKPMVGNNRSHA) is disordered.

The protein belongs to the bacterial ribosomal protein bL28 family.

The sequence is that of Large ribosomal subunit protein bL28 from Shewanella baltica (strain OS223).